The chain runs to 283 residues: Pyridoxal kinase PdxY (283 aa).

Ser8 is a binding site for substrate. Asp110 and Glu147 together coordinate ATP. Substrate is bound at residue Asp219.

This sequence belongs to the pyridoxine kinase family. PdxY subfamily. Homodimer. The cofactor is Mg(2+).

The enzyme catalyses pyridoxal + ATP = pyridoxal 5'-phosphate + ADP + H(+). Its pathway is cofactor metabolism; pyridoxal 5'-phosphate salvage; pyridoxal 5'-phosphate from pyridoxal: step 1/1. Pyridoxal kinase involved in the salvage pathway of pyridoxal 5'-phosphate (PLP). Catalyzes the phosphorylation of pyridoxal to PLP. The polypeptide is Pyridoxal kinase PdxY (Corynebacterium diphtheriae (strain ATCC 700971 / NCTC 13129 / Biotype gravis)).